The chain runs to 270 residues: Probable feruloyl esterase C (270 aa).

A signal peptide spans 1–22 (MAILSRLLTTVTLGSLLTSAVA).

Belongs to the faeC family.

The protein resides in the secreted. The enzyme catalyses feruloyl-polysaccharide + H2O = ferulate + polysaccharide.. Functionally, involved in degradation of plant cell walls. Hydrolyzes the feruloyl-arabinose ester bond in arabinoxylans, and the feruloyl-galactose ester bond in pectin. Active against paranitrophenyl-acetate, methyl ferulate and wheat arabinoxylan. This Aspergillus terreus (strain NIH 2624 / FGSC A1156) protein is Probable feruloyl esterase C (faeC).